Consider the following 113-residue polypeptide: MSEFDNAIPTAFDPFAEANAEDSGAGTKDYVHVRVQQRNGRKSLTTVQGLKKDYSYNKILKDLKKEFCCNGTVVQDPELGQVIQLQGDQRKNVSSFLVQAGIVKKENIKIHGF.

The protein belongs to the SUI1 family.

Probably involved in translation. This chain is Protein translation factor SUI1 homolog, found in Salix bakko (Japanese willow).